Here is a 291-residue protein sequence, read N- to C-terminus: 4-hydroxy-tetrahydrodipicolinate synthase (291 aa).

Threonine 45 is a pyruvate binding site. Residue tyrosine 133 is the Proton donor/acceptor of the active site. Lysine 161 (schiff-base intermediate with substrate) is an active-site residue. Isoleucine 203 lines the pyruvate pocket.

Belongs to the DapA family. In terms of assembly, homotetramer; dimer of dimers.

It localises to the cytoplasm. The enzyme catalyses L-aspartate 4-semialdehyde + pyruvate = (2S,4S)-4-hydroxy-2,3,4,5-tetrahydrodipicolinate + H2O + H(+). It participates in amino-acid biosynthesis; L-lysine biosynthesis via DAP pathway; (S)-tetrahydrodipicolinate from L-aspartate: step 3/4. Functionally, catalyzes the condensation of (S)-aspartate-beta-semialdehyde [(S)-ASA] and pyruvate to 4-hydroxy-tetrahydrodipicolinate (HTPA). The sequence is that of 4-hydroxy-tetrahydrodipicolinate synthase from Neisseria gonorrhoeae (strain ATCC 700825 / FA 1090).